Consider the following 375-residue polypeptide: MSACVPTVSSPLPLQDPMSKLWRRGSTSGAMEAPEPGETLELSLAGAHGHGVHKKKHKKHKKKHKKKHHQEEEAGPTLQTPAKPQLKLKIKLGGQVLGTKSVPTFTVIPEGPRSPSPLMVVDNEEEPMEGVPLEQYRAWLDEDSNLSPSPLRDLPGDLEGQEEEEEQRWLDALEKGELDDNGDLKKEINERLLTARQRALLQKARSQPSPTLPLPVGGGCPAPALTEEMLLKREERARKRRLQAARRAEEHKNQTIERLTKTAAPSGRGGRGAARGERRGGRAAAPAPAPMVRYCSGAQGSTLSFPPGVPTPTAVAQRPAPSGPAPRCSVPGCPHPRRYACSRTGQALCSLQCYRINLQLRLGGPEGPGSPLLAT.

The tract at residues 1-84 (MSACVPTVSS…GPTLQTPAKP (84 aa)) is disordered. Residues 50 to 68 (HGVHKKKHKKHKKKHKKKH) show a composition bias toward basic residues. Phosphoserine occurs at positions 114, 116, 144, 147, and 149. 4 disordered regions span residues 143 to 165 (DSNLSPSPLRDLPGDLEGQEEEE), 201 to 220 (LQKARSQPSPTLPLPVGGGC), 262 to 287 (TAAPSGRGGRGAARGERRGGRAAAPA), and 312 to 331 (PTAVAQRPAPSGPAPRCSVP). Residues 230–262 (LLKREERARKRRLQAARRAEEHKNQTIERLTKT) adopt a coiled-coil conformation. The HIT-type zinc finger occupies 324-355 (PAPRCSVPGCPHPRRYACSRTGQALCSLQCYR).

Component of the chromatin remodeling INO80 complex; specifically part of a complex module associated with the helicase ATP-binding and the helicase C-terminal domain of INO80. Interacts with RP9. Expressed strongly in the testis and moderately in the kidney, skeletal muscle, liver and lung.

The protein resides in the nucleus. The protein localises to the nucleolus. Proposed core component of the chromatin remodeling INO80 complex which is involved in transcriptional regulation, DNA replication and probably DNA repair. The sequence is that of INO80 complex subunit B (Ino80b) from Mus musculus (Mouse).